The primary structure comprises 229 residues: tRNA (guanine-N(7)-)-methyltransferase (229 aa).

S-adenosyl-L-methionine contacts are provided by E59, E84, D111, and D134. D134 is an active-site residue. Substrate contacts are provided by residues K138, D170, and 205–208 (TKFE).

It belongs to the class I-like SAM-binding methyltransferase superfamily. TrmB family.

The enzyme catalyses guanosine(46) in tRNA + S-adenosyl-L-methionine = N(7)-methylguanosine(46) in tRNA + S-adenosyl-L-homocysteine. It functions in the pathway tRNA modification; N(7)-methylguanine-tRNA biosynthesis. Its function is as follows. Catalyzes the formation of N(7)-methylguanine at position 46 (m7G46) in tRNA. This Nitrosospira multiformis (strain ATCC 25196 / NCIMB 11849 / C 71) protein is tRNA (guanine-N(7)-)-methyltransferase.